Consider the following 854-residue polypeptide: Translation initiation factor IF-2 (854 aa).

Residues 61 to 72 (KNIKTPTAKKPK) are compositionally biased toward basic residues. Disordered stretches follow at residues 61–115 (KNIK…LASA) and 167–186 (ESLKKKKKEKKSFVASKKES). The segment covering 73 to 108 (KENAKDQEKLNESEKKEPKKEESKEQEKQEIIDTHK) has biased composition (basic and acidic residues). One can recognise a tr-type G domain in the interval 353-520 (TRAPVITIMG…IVLLQADILE (168 aa)). The tract at residues 362–369 (GHVDHGKT) is G1. 362 to 369 (GHVDHGKT) contacts GTP. The G2 stretch occupies residues 387–391 (GITQH). The G3 stretch occupies residues 408-411 (DTPG). GTP-binding positions include 408–412 (DTPGH) and 462–465 (NKMD). Residues 462–465 (NKMD) are G4. The interval 498 to 500 (SAK) is G5.

This sequence belongs to the TRAFAC class translation factor GTPase superfamily. Classic translation factor GTPase family. IF-2 subfamily.

Its subcellular location is the cytoplasm. One of the essential components for the initiation of protein synthesis. Protects formylmethionyl-tRNA from spontaneous hydrolysis and promotes its binding to the 30S ribosomal subunits. Also involved in the hydrolysis of GTP during the formation of the 70S ribosomal complex. This Campylobacter jejuni subsp. doylei (strain ATCC BAA-1458 / RM4099 / 269.97) protein is Translation initiation factor IF-2.